A 177-amino-acid polypeptide reads, in one-letter code: Large ribosomal subunit protein uL6 (177 aa).

Belongs to the universal ribosomal protein uL6 family. Part of the 50S ribosomal subunit.

This protein binds to the 23S rRNA, and is important in its secondary structure. It is located near the subunit interface in the base of the L7/L12 stalk, and near the tRNA binding site of the peptidyltransferase center. This chain is Large ribosomal subunit protein uL6, found in Azoarcus sp. (strain BH72).